Reading from the N-terminus, the 198-residue chain is Glycerol-3-phosphate acyltransferase (198 aa).

5 consecutive transmembrane segments (helical) span residues 6 to 26, 56 to 78, 83 to 101, 113 to 133, and 155 to 175; these read FLPV…GLVL, LAAG…AGYI, AAMA…PVWL, IGIL…LWLA, and FLWW…TLLL.

This sequence belongs to the PlsY family. In terms of assembly, probably interacts with PlsX.

It localises to the cell inner membrane. The enzyme catalyses an acyl phosphate + sn-glycerol 3-phosphate = a 1-acyl-sn-glycero-3-phosphate + phosphate. The protein operates within lipid metabolism; phospholipid metabolism. Its function is as follows. Catalyzes the transfer of an acyl group from acyl-phosphate (acyl-PO(4)) to glycerol-3-phosphate (G3P) to form lysophosphatidic acid (LPA). This enzyme utilizes acyl-phosphate as fatty acyl donor, but not acyl-CoA or acyl-ACP. The sequence is that of Glycerol-3-phosphate acyltransferase from Bradyrhizobium diazoefficiens (strain JCM 10833 / BCRC 13528 / IAM 13628 / NBRC 14792 / USDA 110).